A 922-amino-acid chain; its full sequence is Pyruvate dehydrogenase E1 component (922 aa).

Homodimer. Part of an unusual ODH/PDH supercomplex, consisting of AceE (E1), AceF (E2), and Lpd (E3) together with OdhA (E1+E2). Mg(2+) is required as a cofactor. It depends on thiamine diphosphate as a cofactor.

It catalyses the reaction N(6)-[(R)-lipoyl]-L-lysyl-[protein] + pyruvate + H(+) = N(6)-[(R)-S(8)-acetyldihydrolipoyl]-L-lysyl-[protein] + CO2. Is a specific component of the pyruvate dehydrogenase (PDH) complex, that catalyzes the overall conversion of pyruvate to acetyl-CoA and CO(2). AceE has reductase activity with pyruvate but does not react with 2-oxoglutarate. The protein is Pyruvate dehydrogenase E1 component (aceE) of Corynebacterium glutamicum (strain ATCC 13032 / DSM 20300 / JCM 1318 / BCRC 11384 / CCUG 27702 / LMG 3730 / NBRC 12168 / NCIMB 10025 / NRRL B-2784 / 534).